Reading from the N-terminus, the 260-residue chain is Indole-3-glycerol phosphate synthase (260 aa).

This sequence belongs to the TrpC family.

The enzyme catalyses 1-(2-carboxyphenylamino)-1-deoxy-D-ribulose 5-phosphate + H(+) = (1S,2R)-1-C-(indol-3-yl)glycerol 3-phosphate + CO2 + H2O. The protein operates within amino-acid biosynthesis; L-tryptophan biosynthesis; L-tryptophan from chorismate: step 4/5. The polypeptide is Indole-3-glycerol phosphate synthase (Chloroherpeton thalassium (strain ATCC 35110 / GB-78)).